The chain runs to 359 residues: Alanine racemase (359 aa).

Residue lysine 34 is the Proton acceptor; specific for D-alanine of the active site. Position 34 is an N6-(pyridoxal phosphate)lysine (lysine 34). Arginine 129 contacts substrate. Residue tyrosine 256 is the Proton acceptor; specific for L-alanine of the active site. Methionine 304 contributes to the substrate binding site.

The protein belongs to the alanine racemase family. The cofactor is pyridoxal 5'-phosphate.

The enzyme catalyses L-alanine = D-alanine. It functions in the pathway amino-acid biosynthesis; D-alanine biosynthesis; D-alanine from L-alanine: step 1/1. In terms of biological role, catalyzes the interconversion of L-alanine and D-alanine. May also act on other amino acids. This Photobacterium profundum (strain SS9) protein is Alanine racemase (alr).